An 87-amino-acid polypeptide reads, in one-letter code: MAKGQSLQDPFLNALRRERIPVSIYLVNGIKLQGQIESFDQFVILLKNTVNQMVYKHAISTVVPARPVSHHSGDRPASDRPAEKSEE.

Residues 9–68 (DPFLNALRRERIPVSIYLVNGIKLQGQIESFDQFVILLKNTVNQMVYKHAISTVVPARPV) enclose the Sm domain. The segment at 65–87 (ARPVSHHSGDRPASDRPAEKSEE) is disordered. Residues 71-87 (HSGDRPASDRPAEKSEE) show a composition bias toward basic and acidic residues.

Belongs to the Hfq family.

RNA chaperone that binds small regulatory RNA (sRNAs) and mRNAs to facilitate mRNA translational regulation in response to envelope stress, environmental stress and changes in metabolite concentrations. Also binds with high specificity to tRNAs. Essential for virulence in the suckling mouse model of cholera pathogenesis. The chain is RNA-binding protein Hfq from Vibrio cholerae serotype O1 (strain ATCC 39315 / El Tor Inaba N16961).